A 189-amino-acid polypeptide reads, in one-letter code: Glucose-6-phosphate isomerase (189 aa).

His-88, His-90, Glu-97, and His-136 together coordinate Fe cation.

Belongs to the archaeal-type GPI family. In terms of assembly, homodimer.

The protein localises to the cytoplasm. The enzyme catalyses alpha-D-glucose 6-phosphate = beta-D-fructose 6-phosphate. It functions in the pathway carbohydrate degradation; glycolysis; D-glyceraldehyde 3-phosphate and glycerone phosphate from D-glucose: step 2/4. The chain is Glucose-6-phosphate isomerase from Thermococcus gammatolerans (strain DSM 15229 / JCM 11827 / EJ3).